Consider the following 1196-residue polypeptide: Truncated transposon Ty1-A Gag-Pol polyprotein (1196 aa).

One can recognise an Integrase catalytic domain in the interval 101 to 276 (NSYEPFQYLH…AGLDISTLLP (176 aa)). Positions 112 and 177 each coordinate Mg(2+). Disordered regions lie at residues 397-528 (SKAV…ETEK), 533-552 (RSPS…NIVP), and 571-628 (DLPL…DNET). The span at 401-410 (SPTDSTPPST) shows a compositional bias: low complexity. Over residues 446–456 (STPQISNIEST) the composition is skewed to polar residues. Basic and acidic residues predominate over residues 479 to 494 (ESSHASKSKDFRHSDS). Polar residues-rich tracts occupy residues 495 to 523 (YSEN…QISD) and 542 to 552 (PENNSSHNIVP). Positions 619 to 653 (KKRSLEDNETEIKVSRDTWNTKNMRSLEPPRSKKR) match the Bipartite nuclear localization signal motif. In terms of domain architecture, Reverse transcriptase Ty1/copia-type spans 779–917 (NNYYITQLDI…DILGLEIKYQ (139 aa)). Mg(2+) contacts are provided by aspartate 787, aspartate 868, aspartate 869, aspartate 1051, glutamate 1093, and aspartate 1126. The RNase H Ty1/copia-type domain maps to 1051–1193 (DASYGNQPYY…IKTFKLLTNK (143 aa)).

Initially, virus-like particles (VLPs) are composed of the structural unprocessed proteins Gag and Gag-Pol, and also contain the host initiator methionine tRNA (tRNA(i)-Met) which serves as a primer for minus-strand DNA synthesis, and a dimer of genomic Ty RNA. Processing of the polyproteins occurs within the particle and proceeds by an ordered pathway, called maturation. First, the protease (PR) is released by autocatalytic cleavage of the Gag-Pol polyprotein yielding capsid protein p45 and a Pol-p154 precursor protein. This cleavage is a prerequisite for subsequent processing of Pol-p154 at the remaining sites to release the mature structural and catalytic proteins. Maturation takes place prior to the RT reaction and is required to produce transposition-competent VLPs.

The protein localises to the cytoplasm. Its subcellular location is the nucleus. The catalysed reaction is DNA(n) + a 2'-deoxyribonucleoside 5'-triphosphate = DNA(n+1) + diphosphate. It carries out the reaction Endonucleolytic cleavage to 5'-phosphomonoester.. Reverse transcriptase/ribonuclease H (RT) is a multifunctional enzyme that catalyzes the conversion of the retro-elements RNA genome into dsDNA within the VLP. The enzyme displays a DNA polymerase activity that can copy either DNA or RNA templates, and a ribonuclease H (RNase H) activity that cleaves the RNA strand of RNA-DNA heteroduplexes during plus-strand synthesis and hydrolyzes RNA primers. The conversion leads to a linear dsDNA copy of the retrotransposon that includes long terminal repeats (LTRs) at both ends. In terms of biological role, integrase (IN) targets the VLP to the nucleus, where a subparticle preintegration complex (PIC) containing at least integrase and the newly synthesized dsDNA copy of the retrotransposon must transit the nuclear membrane. Once in the nucleus, integrase performs the integration of the dsDNA into the host genome. This Saccharomyces cerevisiae (strain ATCC 204508 / S288c) (Baker's yeast) protein is Truncated transposon Ty1-A Gag-Pol polyprotein (TY1B-A).